Reading from the N-terminus, the 192-residue chain is Signal peptidase complex catalytic subunit SEC11C (192 aa).

Residues M1–R28 are Cytoplasmic-facing. A helical; Signal-anchor for type II membrane protein membrane pass occupies residues Q29–W48. Residues K49–S192 are Lumenal-facing. Catalysis depends on charge relay system residues S68, H108, and D134. The tract at residues A177–L188 is C-terminal short (CTS) helix.

This sequence belongs to the peptidase S26B family. In terms of assembly, component of the signal peptidase complex paralog C (SPC-C) composed of a catalytic subunit SEC11C and three accessory subunits SPCS1, SPCS2 and SPCS3. Within the complex, interacts with SPCS2 and SPCS3. The complex induces a local thinning of the ER membrane which is used to measure the length of the signal peptide (SP) h-region of protein substrates. This ensures the selectivity of the complex towards h-regions shorter than 18-20 amino acids. May undergo processing at the N-terminus.

The protein localises to the endoplasmic reticulum membrane. It carries out the reaction Cleavage of hydrophobic, N-terminal signal or leader sequences from secreted and periplasmic proteins.. Catalytic component of the signal peptidase complex (SPC) which catalyzes the cleavage of N-terminal signal sequences from nascent proteins as they are translocated into the lumen of the endoplasmic reticulum. Specifically cleaves N-terminal signal peptides that contain a hydrophobic alpha-helix (h-region) shorter than 18-20 amino acids. This is Signal peptidase complex catalytic subunit SEC11C (SEC11C) from Homo sapiens (Human).